We begin with the raw amino-acid sequence, 132 residues long: ATP synthase epsilon chain (132 aa).

Belongs to the ATPase epsilon chain family. In terms of assembly, F-type ATPases have 2 components, CF(1) - the catalytic core - and CF(0) - the membrane proton channel. CF(1) has five subunits: alpha(3), beta(3), gamma(1), delta(1), epsilon(1). CF(0) has three main subunits: a, b and c.

The protein localises to the cell inner membrane. Functionally, produces ATP from ADP in the presence of a proton gradient across the membrane. This Aquifex aeolicus (strain VF5) protein is ATP synthase epsilon chain (atpC).